The primary structure comprises 111 residues: Pyrimidine/purine nucleoside phosphorylase 1 (111 aa).

This sequence belongs to the nucleoside phosphorylase PpnP family.

The catalysed reaction is a purine D-ribonucleoside + phosphate = a purine nucleobase + alpha-D-ribose 1-phosphate. It catalyses the reaction adenosine + phosphate = alpha-D-ribose 1-phosphate + adenine. The enzyme catalyses cytidine + phosphate = cytosine + alpha-D-ribose 1-phosphate. It carries out the reaction guanosine + phosphate = alpha-D-ribose 1-phosphate + guanine. The catalysed reaction is inosine + phosphate = alpha-D-ribose 1-phosphate + hypoxanthine. It catalyses the reaction thymidine + phosphate = 2-deoxy-alpha-D-ribose 1-phosphate + thymine. The enzyme catalyses uridine + phosphate = alpha-D-ribose 1-phosphate + uracil. It carries out the reaction xanthosine + phosphate = alpha-D-ribose 1-phosphate + xanthine. Its function is as follows. Catalyzes the phosphorolysis of diverse nucleosides, yielding D-ribose 1-phosphate and the respective free bases. Can use uridine, adenosine, guanosine, cytidine, thymidine, inosine and xanthosine as substrates. Also catalyzes the reverse reactions. This is Pyrimidine/purine nucleoside phosphorylase 1 from Psychrobacter cryohalolentis (strain ATCC BAA-1226 / DSM 17306 / VKM B-2378 / K5).